Here is a 429-residue protein sequence, read N- to C-terminus: Phosphoribosylamine--glycine ligase (429 aa).

Positions 109-316 (KDFLARHNIP…LVELCLAACE (208 aa)) constitute an ATP-grasp domain. Residue 135-196 (LREKGAPIVI…EEFLDGEEAS (62 aa)) coordinates ATP. Residues 212–236 (SQDHKRVGDKDTGPNTGGMGAYSPA) are disordered. Positions 213–223 (QDHKRVGDKDT) are enriched in basic and acidic residues. Mg(2+) contacts are provided by glutamate 286 and asparagine 288.

The protein belongs to the GARS family. Monomer. Mg(2+) is required as a cofactor. Requires Mn(2+) as cofactor.

It carries out the reaction 5-phospho-beta-D-ribosylamine + glycine + ATP = N(1)-(5-phospho-beta-D-ribosyl)glycinamide + ADP + phosphate + H(+). Its pathway is purine metabolism; IMP biosynthesis via de novo pathway; N(1)-(5-phospho-D-ribosyl)glycinamide from 5-phospho-alpha-D-ribose 1-diphosphate: step 2/2. The polypeptide is Phosphoribosylamine--glycine ligase (Escherichia coli O6:H1 (strain CFT073 / ATCC 700928 / UPEC)).